Consider the following 1701-residue polypeptide: Rho guanine nucleotide exchange factor TIAM2 (1701 aa).

Disordered stretches follow at residues 1-21 (MGNS…NTIT), 201-250 (SPTL…SSWY), 265-293 (GSFL…FNQS), and 389-417 (SLSR…DGLN). Residue Gly2 is the site of N-myristoyl glycine attachment. Residues 238 to 248 (SKGSSLSSESS) show a composition bias toward low complexity. A compositionally biased stretch (basic and acidic residues) spans 397–413 (LQEPRSKEGSDYFDSRS). The 115-residue stretch at 506-620 (VVRKAGWLFF…WVTAVHSACA (115 aa)) folds into the PH 1 domain. Positions 628–695 (GKEDTLRLLK…KFHMDLFRMR (68 aa)) form a coiled coil. The region spanning 810 to 881 (IQTYVHFQDN…YMQQQVYDEI (72 aa)) is the RBD domain. A PDZ domain is found at 890-976 (DVQLTKTGSV…GLTLIARPPD (87 aa)). Residues 1070-1092 (DSQANGMEGPRENQDPPPRSLAR) form a disordered region. A DH domain is found at 1099-1293 (RLRKVIQELV…EKVASHINEM (195 aa)). Residues 1347–1478 (DLELTVFVFK…EKTCKDRLVP (132 aa)) enclose the PH 2 domain. Disordered regions lie at residues 1500–1556 (NSSS…GLAD) and 1568–1628 (LSDE…PKLV). Low complexity predominate over residues 1513-1527 (GTLLDSDEGSLSSGT). Ser1583 carries the post-translational modification Phosphoserine. A compositionally biased stretch (basic and acidic residues) spans 1596 to 1607 (RISEDPDVHPEA). Thr1648 carries the phosphothreonine modification.

It belongs to the TIAM family. As to quaternary structure, interacts with MAP1A, MAP1B, PARP1 and YWHAE. Interacts with CD44, PARD3 and MAPK8IP2. Post-translationally, phosphorylated on serine and threonine residues. Phosphorylated on Thr-1648 by Rho-kinase. Its phosphorylation by Rho-kinase inhibits its guanine nucleotide exchange activity, its interaction with MAP1A, MAP1B, PARP1 and YWHAE and reduces its ability to promote neurite growth. Expressed in the occipital, frontal and temporal lobes, cerebellum, putamen and testis.

The protein localises to the cytoplasm. It localises to the cell projection. It is found in the lamellipodium. Its subcellular location is the filopodium. The protein resides in the growth cone. The protein localises to the neuron projection. It localises to the perikaryon. Its function is as follows. Modulates the activity of RHO-like proteins and connects extracellular signals to cytoskeletal activities. Acts as a GDP-dissociation stimulator protein that stimulates the GDP-GTP exchange activity of RHO-like GTPases and activates them. Mediates extracellular laminin signals to activate Rac1, contributing to neurite growth. Involved in lamellipodial formation and advancement of the growth cone of embryonic hippocampal neurons. Promotes migration of neurons in the cerebral cortex. When overexpressed, induces membrane ruffling accompanied by the accumulation of actin filaments along the altered plasma membrane. Activates specifically RAC1, but not CDC42 and RHOA. This is Rho guanine nucleotide exchange factor TIAM2 (TIAM2) from Homo sapiens (Human).